Here is a 119-residue protein sequence, read N- to C-terminus: Evasin P983 (119 aa).

An N-terminal signal peptide occupies residues 1–21 (MKASFCVIASCLVVFALKGTA). 4 disulfide bridges follow: cysteine 37–cysteine 59, cysteine 55–cysteine 97, cysteine 72–cysteine 102, and cysteine 92–cysteine 111. N-linked (GlcNAc...) asparagine glycosylation is found at asparagine 48 and asparagine 67.

Its subcellular location is the secreted. In terms of biological role, salivary chemokine-binding protein which binds to host chemokines CCL2, CCL3 and CCL8. The sequence is that of Evasin P983 from Amblyomma cajennense (Cayenne tick).